The primary structure comprises 582 residues: Actin-histidine N-methyltransferase (582 aa).

S-adenosyl-L-methionine is bound by residues Arg-75, 104-106, Arg-254, 275-279, and 325-327; these read EGF, DMCNH, and NGF. The SET domain maps to 94–314; it reads DGFELVEFPE…SGEQIYIFYG (221 aa). The disordered stretch occupies residues 550–582; the sequence is DKDLLPNGTKSENDSFLAEDNQQETGNAKDFCS.

This sequence belongs to the class V-like SAM-binding methyltransferase superfamily. SETD3 actin-histidine methyltransferase family.

It localises to the cytoplasm. It catalyses the reaction L-histidyl-[protein] + S-adenosyl-L-methionine = N(tele)-methyl-L-histidyl-[protein] + S-adenosyl-L-homocysteine + H(+). Protein-histidine N-methyltransferase that specifically mediates 3-methylhistidine (tele-methylhistidine) methylation of actin at 'His-73'. Does not have protein-lysine N-methyltransferase activity and probably only catalyzes histidine methylation of actin. The protein is Actin-histidine N-methyltransferase of Xenopus tropicalis (Western clawed frog).